We begin with the raw amino-acid sequence, 188 residues long: Elongation factor P (188 aa).

Belongs to the elongation factor P family.

The protein localises to the cytoplasm. It functions in the pathway protein biosynthesis; polypeptide chain elongation. In terms of biological role, involved in peptide bond synthesis. Stimulates efficient translation and peptide-bond synthesis on native or reconstituted 70S ribosomes in vitro. Probably functions indirectly by altering the affinity of the ribosome for aminoacyl-tRNA, thus increasing their reactivity as acceptors for peptidyl transferase. The protein is Elongation factor P of Nitrobacter winogradskyi (strain ATCC 25391 / DSM 10237 / CIP 104748 / NCIMB 11846 / Nb-255).